The sequence spans 214 residues: Adenylate kinase (214 aa).

10–15 (GAGKGT) contributes to the ATP binding site. The NMP stretch occupies residues 30-59 (STGDMLRAAVKAQSELGRQAKALMDAGKLV). Residues Thr-31, Arg-36, 57–59 (KLV), 85–88 (GFPR), and Gln-92 each bind AMP. The tract at residues 122 to 159 (GRRVHAPSGRVYHVKFNPPKQEGKDDVTGELLTSRKDD) is LID. ATP-binding positions include Arg-123 and 132-133 (VY). Residues Arg-156 and Arg-167 each contribute to the AMP site. Arg-200 is an ATP binding site.

It belongs to the adenylate kinase family. As to quaternary structure, monomer.

The protein resides in the cytoplasm. The catalysed reaction is AMP + ATP = 2 ADP. It functions in the pathway purine metabolism; AMP biosynthesis via salvage pathway; AMP from ADP: step 1/1. Functionally, catalyzes the reversible transfer of the terminal phosphate group between ATP and AMP. Plays an important role in cellular energy homeostasis and in adenine nucleotide metabolism. The polypeptide is Adenylate kinase (Sodalis glossinidius (strain morsitans)).